Reading from the N-terminus, the 437-residue chain is Transmembrane protease serine 4 (437 aa).

The Cytoplasmic segment spans residues methionine 1–valine 32. The chain crosses the membrane as a helical; Signal-anchor for type II membrane protein span at residues glycine 33–isoleucine 53. Over lysine 54–leucine 437 the chain is Extracellular. Residues tyrosine 61–valine 93 form the LDL-receptor class A domain. 8 cysteine pairs are disulfide-bonded: cysteine 64–cysteine 83, cysteine 77–cysteine 92, cysteine 127–cysteine 183, cysteine 140–cysteine 193, cysteine 196–cysteine 310, cysteine 230–cysteine 246, cysteine 356–cysteine 372, and cysteine 383–cysteine 410. The 111-residue stretch at lysine 94–arginine 204 folds into the SRCR domain. 2 N-linked (GlcNAc...) asparagine glycosylation sites follow: asparagine 130 and asparagine 178. Positions valine 205 to lysine 434 constitute a Peptidase S1 domain. Active-site charge relay system residues include histidine 245 and aspartate 290. The active-site Charge relay system is the serine 387.

It belongs to the peptidase S1 family. Post-translationally, proteolytically processed; probably by an autocatalytic mechanism. High levels in pancreatic, gastric, colorectal and ampullary cancer. Very weak expression in normal gastrointestinal and urogenital tract. Coexpressed with ACE2 within mature enterocytes.

The protein localises to the cell membrane. It localises to the secreted. In terms of biological role, plasma membrane-anchored serine protease that directly induces processing of pro-uPA/PLAU into the active form through proteolytic activity. Seems to be capable of activating ENaC. Functionally, (Microbial infection) In gut epithelial cells, facilitates human coronavirus SARS-CoV-2 infection through, at least, the cleavage of coronavirus spike glycoproteins which activates the glycoprotein for host cell entry. The polypeptide is Transmembrane protease serine 4 (Homo sapiens (Human)).